The chain runs to 255 residues: Sorbose reductase sou1 (255 aa).

The NADP(+) site is built by Ile21 and Asn95. Residues Ser148 and Tyr163 each act as proton donor in the active site. Positions 163, 167, 195, and 197 each coordinate NADP(+). Lys167 functions as the Lowers pKa of active site Tyr in the catalytic mechanism.

Belongs to the short-chain dehydrogenases/reductases (SDR) family.

The enzyme catalyses D-sorbitol + NADP(+) = keto-L-sorbose + NADPH + H(+). Its function is as follows. Catalyzes the NADP dependent reduction of L-sorbose to D-glucitol. In Schizosaccharomyces pombe (strain 972 / ATCC 24843) (Fission yeast), this protein is Sorbose reductase sou1 (sou1).